We begin with the raw amino-acid sequence, 277 residues long: Glycerol-3-phosphate acyltransferase (277 aa).

5 helical membrane passes run 3–23 (FFIF…AIIV), 55–75 (IMVM…AKLL), 79–99 (PVTV…PVFF), 111–131 (IGAL…TWLL), and 155–175 (LILV…ILVL). The segment at 231 to 277 (KTEQAEAVKKPKAKKATTKAKKTTSKEETAKKPKSTKPKTKTVKEKE) is disordered. 2 stretches are compositionally biased toward basic residues: residues 240 to 253 (KPKA…AKKT) and 262 to 271 (KPKSTKPKTK).

This sequence belongs to the PlsY family. Probably interacts with PlsX.

The protein resides in the cell inner membrane. The catalysed reaction is an acyl phosphate + sn-glycerol 3-phosphate = a 1-acyl-sn-glycero-3-phosphate + phosphate. It functions in the pathway lipid metabolism; phospholipid metabolism. Its function is as follows. Catalyzes the transfer of an acyl group from acyl-phosphate (acyl-PO(4)) to glycerol-3-phosphate (G3P) to form lysophosphatidic acid (LPA). This enzyme utilizes acyl-phosphate as fatty acyl donor, but not acyl-CoA or acyl-ACP. This is Glycerol-3-phosphate acyltransferase from Legionella pneumophila (strain Lens).